Reading from the N-terminus, the 554-residue chain is Glutamine--tRNA ligase (554 aa).

Positions Pro-34–His-44 match the 'HIGH' region motif. Residues Glu-35 to Asn-37 and His-41 to Ser-47 contribute to the ATP site. Positions 67 and 212 each coordinate L-glutamine. ATP-binding positions include Thr-231, Arg-261–Leu-262, and Met-269–Lys-271. Positions Val-268 to Arg-272 match the 'KMSKS' region motif. The tract at residues Thr-317 to Glu-324 is interaction with tRNA.

It belongs to the class-I aminoacyl-tRNA synthetase family. Monomer.

The protein resides in the cytoplasm. The enzyme catalyses tRNA(Gln) + L-glutamine + ATP = L-glutaminyl-tRNA(Gln) + AMP + diphosphate. This Escherichia coli O127:H6 (strain E2348/69 / EPEC) protein is Glutamine--tRNA ligase.